We begin with the raw amino-acid sequence, 473 residues long: Crt homolog 1 (473 aa).

The Cytoplasmic segment spans residues 1 to 49; that stretch reads MTNNDKEKQPLLSSINNEDDNGATINIVEPVPWYSNIPQKIKNSMSKET. Residues 50-70 traverse the membrane as a helical segment; it reads ITILIYVVLYVTSGVINSVLL. Residues 71-80 are Vacuolar-facing; that stretch reads KKVMNKFTNY. The helical transmembrane segment at 81 to 101 threads the bilayer; the sequence is AFFLSQLTNFGYVPIFGAVTA. At 102–121 the chain is on the cytoplasmic side; that stretch reads YKIFFTKDIPQETRDFPTRK. The chain crosses the membrane as a helical span at residues 122 to 142; it reads FAIMGALDAITGFFVVIGGVS. Residues 143 to 146 lie on the Vacuolar side of the membrane; that stretch reads TSGP. The helical transmembrane segment at 147–167 threads the bilayer; that stretch reads LQQLLNQAIIPFTMIASFIFL. Topologically, residues 168-175 are cytoplasmic; it reads KERYSLIQ. A helical membrane pass occupies residues 176 to 196; it reads LGGALVIIGGVVTSLIPSLLG. The Vacuolar portion of the chain corresponds to 197–207; that stretch reads GSSGGNKPFWN. The chain crosses the membrane as a helical span at residues 208-228; sequence FFYLLSVIPGALSNVYKDIGF. The Cytoplasmic portion of the chain corresponds to 229 to 248; it reads QAVADMDVWYLQYWDSLYQS. A helical membrane pass occupies residues 249-269; that stretch reads IFGLFLFPVNNWLPPPATVKF. Residues 270 to 322 are Vacuolar-facing; sequence EQILPFMKEGAECLAGINSIIPSYINGTSSFTATSCTYAPDATITCDDCHNAW. Asn-295 carries N-linked (GlcNAc...) asparagine glycosylation. A helical membrane pass occupies residues 323–343; it reads IVIILYMTINIIYNIFILLVL. Over 344 to 352 the chain is Cytoplasmic; the sequence is KHAGATVYS. The chain crosses the membrane as a helical span at residues 353 to 373; the sequence is IANTLRLPLTNIVFSIHFIMG. A topological domain (vacuolar) is located at residue Ser-374. Residues 375–395 traverse the membrane as a helical segment; that stretch reads AVSPFSGLSVAGLVIILVGLG. Topologically, residues 396 to 473 are cytoplasmic; that stretch reads GYRVGSMIKQ…AANNNNYGDA (78 aa).

Belongs to the CRT-like transporter family.

Its subcellular location is the vacuole membrane. Functionally, nutrient transporter. Involved in maintaining the osmotic homeostasis of the digestive vacuole. The protein is Crt homolog 1 (crtp1) of Dictyostelium discoideum (Social amoeba).